Reading from the N-terminus, the 367-residue chain is DNA replication and repair protein RecF (367 aa).

30-37 (GNNAQGKT) contacts ATP.

This sequence belongs to the RecF family.

It localises to the cytoplasm. Its function is as follows. The RecF protein is involved in DNA metabolism; it is required for DNA replication and normal SOS inducibility. RecF binds preferentially to single-stranded, linear DNA. It also seems to bind ATP. This Clostridium tetani (strain Massachusetts / E88) protein is DNA replication and repair protein RecF.